Consider the following 210-residue polypeptide: NAD(P)H-hydrate epimerase (210 aa).

One can recognise a YjeF N-terminal domain in the interval 11–210; it reads AHNFDDYTIN…TVADIGIYEP (200 aa). Residue 60–64 participates in (6S)-NADPHX binding; that stretch reads NNGGD. Asn61 and Asp123 together coordinate K(+). (6S)-NADPHX is bound by residues 127 to 133 and Asp156; that span reads GVGLSRD. Position 159 (Thr159) interacts with K(+).

This sequence belongs to the NnrE/AIBP family. Requires K(+) as cofactor.

It catalyses the reaction (6R)-NADHX = (6S)-NADHX. The catalysed reaction is (6R)-NADPHX = (6S)-NADPHX. Catalyzes the epimerization of the S- and R-forms of NAD(P)HX, a damaged form of NAD(P)H that is a result of enzymatic or heat-dependent hydration. This is a prerequisite for the S-specific NAD(P)H-hydrate dehydratase to allow the repair of both epimers of NAD(P)HX. The chain is NAD(P)H-hydrate epimerase from Oenococcus oeni (strain ATCC BAA-331 / PSU-1).